Here is a 254-residue protein sequence, read N- to C-terminus: 5-oxoprolinase subunit A (254 aa).

It belongs to the LamB/PxpA family. In terms of assembly, forms a complex composed of PxpA, PxpB and PxpC.

The enzyme catalyses 5-oxo-L-proline + ATP + 2 H2O = L-glutamate + ADP + phosphate + H(+). Functionally, catalyzes the cleavage of 5-oxoproline to form L-glutamate coupled to the hydrolysis of ATP to ADP and inorganic phosphate. This is 5-oxoprolinase subunit A from Burkholderia vietnamiensis (strain G4 / LMG 22486) (Burkholderia cepacia (strain R1808)).